Reading from the N-terminus, the 475-residue chain is ATP synthase subunit beta (475 aa).

152–159 (GGAGVGKT) lines the ATP pocket.

Belongs to the ATPase alpha/beta chains family. As to quaternary structure, F-type ATPases have 2 components, CF(1) - the catalytic core - and CF(0) - the membrane proton channel. CF(1) has five subunits: alpha(3), beta(3), gamma(1), delta(1), epsilon(1). CF(0) has three main subunits: a(1), b(2) and c(9-12). The alpha and beta chains form an alternating ring which encloses part of the gamma chain. CF(1) is attached to CF(0) by a central stalk formed by the gamma and epsilon chains, while a peripheral stalk is formed by the delta and b chains.

It localises to the cell inner membrane. The enzyme catalyses ATP + H2O + 4 H(+)(in) = ADP + phosphate + 5 H(+)(out). In terms of biological role, produces ATP from ADP in the presence of a proton gradient across the membrane. The catalytic sites are hosted primarily by the beta subunits. This is ATP synthase subunit beta from Wolbachia sp. subsp. Drosophila simulans (strain wRi).